The chain runs to 496 residues: Hexokinase-1 (496 aa).

Residues 4-24 (VAVGATVVCTAAVCAVAVLVV) form a helical membrane-spanning segment. Residues 35–487 (GRVLAILKAF…SGIGAALLAA (453 aa)) form the Hexokinase domain. The hexokinase small subdomain stretch occupies residues 90-228 (SGDEKGLFYA…GLDMRIAALV (139 aa)). ADP contacts are provided by Gly104, Thr105, and Asn106. Positions 194, 195, 229, and 230 each coordinate D-glucose. Positions 229–476 (NDTVGTLAGG…GSVEVTHSND (248 aa)) are hexokinase large subdomain. ADP is bound at residue Thr253. Positions 256, 284, and 315 each coordinate D-glucose. Gly441 provides a ligand contact to ADP.

Belongs to the hexokinase family. In terms of assembly, interacts with RPT5B in nucleus. Interacts with RHIP1. Interacts with KING1 in mitochondria. Interacts with CLF (via SANT domain) and EZA1/SWN (via SANT domain) in nucleus. In terms of tissue distribution, highly expressed in flowers and siliques, at intermediate levels in roots and stems, and at lower levels in rosette and cauline leaves.

The protein resides in the mitochondrion outer membrane. Its subcellular location is the nucleus. It carries out the reaction a D-hexose + ATP = a D-hexose 6-phosphate + ADP + H(+). It catalyses the reaction D-fructose + ATP = D-fructose 6-phosphate + ADP + H(+). The catalysed reaction is D-glucose + ATP = D-glucose 6-phosphate + ADP + H(+). Its pathway is carbohydrate metabolism; hexose metabolism. The protein operates within carbohydrate degradation; glycolysis; D-glyceraldehyde 3-phosphate and glycerone phosphate from D-glucose: step 1/4. Fructose and glucose phosphorylating enzyme. May be involved in the phosphorylation of glucose during the export from mitochondrion to cytosol. Acts as a sugar sensor which may regulate sugar-dependent gene repression or activation. Mediates the effects of sugar on plant growth and development independently of its catalytic activity or the sugar metabolism. May regulate the execution of program cell death in plant cells. Promotes roots and leaves growth. Together with sugar, is involved in the regulation of the expression of aquaporin genes, and reduces leaf water conductance, to coordinate sugar levels with the loss of water through transpiration. Regulates cell proliferation and expansion early during leaf development. Involved in sucrose-induced leaf growth stimulation independently of GPT2. May participate to the stimulation of hypocotyl elongation under long-day (LD) conditions. Forms a nuclear complex with CLF and EZA1/SWN to target common glucose-responsive genes and regulate glucose signaling. Is required for CLF- and EZA1/SWN-mediated histone H3 trimethylation on 'Lys-27' (H3K27me3) and glucose-mediated gene repression. In Arabidopsis thaliana (Mouse-ear cress), this protein is Hexokinase-1.